Consider the following 219-residue polypeptide: Histone H1.11R (219 aa).

Composition is skewed to low complexity over residues 1–20 and 28–40; these read MAET…AAKA and AAGG…PAGP. Disordered regions lie at residues 1 to 42 and 89 to 219; these read MAET…GPSV and LVSK…AKKK. In terms of domain architecture, H15 spans 38-111; sequence AGPSVTELIT…GASGSFRLSK (74 aa). Composition is skewed to basic residues over residues 121–135, 143–160, 168–183, and 192–219; these read PKKK…KAAA, KKPK…KAKK, KSVK…KKAV, and KAVK…AKKK.

Belongs to the histone H1/H5 family.

It is found in the nucleus. The protein resides in the chromosome. Functionally, histones H1 are necessary for the condensation of nucleosome chains into higher-order structures. This Gallus gallus (Chicken) protein is Histone H1.11R.